We begin with the raw amino-acid sequence, 441 residues long: Histidinol dehydrogenase homolog (441 aa).

H266 contacts Zn(2+). Catalysis depends on proton acceptor residues E334 and H335. Residue H427 coordinates Zn(2+).

It belongs to the histidinol dehydrogenase family. Zn(2+) serves as cofactor.

The polypeptide is Histidinol dehydrogenase homolog (Cereibacter sphaeroides (strain ATCC 17023 / DSM 158 / JCM 6121 / CCUG 31486 / LMG 2827 / NBRC 12203 / NCIMB 8253 / ATH 2.4.1.) (Rhodobacter sphaeroides)).